The chain runs to 1089 residues: Protein phosphatase 1 regulatory subunit 3A (1089 aa).

The disordered stretch occupies residues 32-57 (KATFKPGFSPQPSRRGSGSSEDMYLD). Residues 37–51 (PGFSPQPSRRGSGSS) show a composition bias toward low complexity. A phosphoserine; by GSK3 mark is found at Ser-40 and Ser-44. Phosphoserine occurs at positions 48 and 51. A Phosphothreonine modification is found at Thr-58. Residues 64 to 67 (RRVS) carry the PP1-binding motif motif. Ser-67 bears the Phosphoserine; by PKA mark. In terms of domain architecture, CBM21 spans 123-231 (EQLQVQKAVL…NNNGTNYILV (109 aa)). Disordered stretches follow at residues 385-420 (FYHS…GDTS), 479-501 (HGDS…KVDN), and 566-649 (PCPS…SDIA). Residues 581–600 (SGSNLEPGTSDLSSPRNFSP) show a composition bias toward polar residues. The segment covering 602 to 614 (TDDHLFQADRENS) has biased composition (basic and acidic residues). The segment covering 615–625 (DSSNPENQNMN) has biased composition (polar residues). At Ser-821 the chain carries Phosphoserine. Residues 949-968 (IMKSGSGGERGGGPILQQKE) are disordered. The segment covering 953 to 962 (GSGGERGGGP) has biased composition (gly residues). A helical membrane pass occupies residues 1047–1067 (LLFLIFLATVYYYDLMIGLAF).

As to quaternary structure, interacts with PPP1CC catalytic subunit of PP1, and associates with glycogen. Post-translationally, phosphorylation at Ser-48 by ISPK stimulates the dephosphorylation of glycogen synthase and phosphorylase kinase. In terms of tissue distribution, skeletal muscle and heart.

The protein localises to the membrane. Functionally, seems to act as a glycogen-targeting subunit for PP1. PP1 is essential for cell division, and participates in the regulation of glycogen metabolism, muscle contractility and protein synthesis. Plays an important role in glycogen synthesis but is not essential for insulin activation of glycogen synthase. This chain is Protein phosphatase 1 regulatory subunit 3A (Ppp1r3a), found in Mus musculus (Mouse).